A 1638-amino-acid chain; its full sequence is Chromatin-remodeling ATPase INO80 (1638 aa).

The tract at residues 41–93 (SLRKPLSSDEETDDEHVVKREHDVQDSDDSSTVGVVRMKQSSKRKSRLLASKE) is disordered. Phosphoserine occurs at positions 47 and 48. Thr-52 is subject to Phosphothreonine. Residues 55–65 (EHVVKREHDVQ) show a composition bias toward basic and acidic residues. Phosphoserine occurs at positions 67 and 70. A coiled-coil region spans residues 136-161 (VQQLLREHVREQRQRKNYYKKAANAQ). Residues 201–259 (RLAEAQAGPKPPKQRRRGRKKRDNMGSPESGEVPPSELGKYTFGDTLPNNEDDDEDGGE) are disordered. The segment covering 212-222 (PKQRRRGRKKR) has biased composition (basic residues). Residues Ser-227 and Ser-230 each carry the phosphoserine modification. The span at 250–259 (NEDDDEDGGE) shows a compositional bias: acidic residues. In terms of domain architecture, DBINO spans 313–438 (IWQIMSKKES…AHFMSKKLGQ (126 aa)). Positions 499 to 528 (KEKEEEEQAQESVEDIKPEPRPEMKDLPQP) are disordered. Positions 502–511 (EEEEQAQESV) are enriched in acidic residues. A compositionally biased stretch (basic and acidic residues) spans 512 to 526 (EDIKPEPRPEMKDLP). The 172-residue stretch at 547 to 718 (ANIYDQGISG…WALLHFIMPT (172 aa)) folds into the Helicase ATP-binding domain. Residue 560 to 567 (DEMGLGKT) coordinates ATP. The Helicase C-terminal domain occupies 1160–1315 (VLDNLLTRLK…GGNFKPDTLK (156 aa)). Disordered regions lie at residues 1335–1364 (QEAK…DVNM) and 1463–1638 (FLDD…VGPE). Polar residues predominate over residues 1338–1350 (KLQSSSPIPAATQ). Basic residues predominate over residues 1473-1495 (MRRRHHPRGTRRGRPRGSTRRGG). 2 stretches are compositionally biased toward low complexity: residues 1505 to 1534 (TPTQ…GTSS) and 1618 to 1627 (SPATSRAPSP).

Belongs to the SNF2/RAD54 helicase family. In terms of assembly, component of the chromatin remodeling Ino80 complex.

The protein localises to the nucleus. The catalysed reaction is ATP + H2O = ADP + phosphate + H(+). In terms of biological role, ATPase component of the chromatin remodeling INO80 complex which is involved in transcriptional regulation, DNA replication and DNA repair. Binds DNA. As part of the INO80 complex, remodels chromatin by shifting nucleosomes. The protein is Chromatin-remodeling ATPase INO80 of Drosophila melanogaster (Fruit fly).